The following is a 252-amino-acid chain: Large ribosomal subunit protein uL29m (252 aa).

A mitochondrion-targeting transit peptide spans 1 to 39; it reads MSTSTVIRPVARSLLQLRKAGNTPPAFLLPCLQSSSTTS. The span at 233–242 shows a compositional bias: acidic residues; sequence EDVLAEAEGE. Residues 233–252 form a disordered region; that stretch reads EDVLAEAEGEAEPKPAQVTA.

Belongs to the universal ribosomal protein uL29 family. Component of the mitochondrial large ribosomal subunit. Mature mitochondrial ribosomes consist of a small (37S) and a large (54S) subunit. The 37S subunit contains at least 33 different proteins and 1 molecule of RNA (15S). The 54S subunit contains at least 45 different proteins and 1 molecule of RNA (21S).

Its subcellular location is the mitochondrion. The sequence is that of Large ribosomal subunit protein uL29m (mrpl4) from Botryotinia fuckeliana (strain B05.10) (Noble rot fungus).